Consider the following 254-residue polypeptide: MADSKMKLHCGFIWGNSAALFCINEKGLDFELVFVDWLAGEAKTKTFLSTLNPFGEVPVLEDGDLKLFEPKAITRYLAEQYKDVGTNLLPDDPKKRAIMSMWMEVDSNQFLPIASTLIKELIINPYQGLATDDTAVQENKEKLSEVLNIYETRLGESPYLAGESFSLADLHHLAPIDYLLNTDEEELKNLIYSRPNVAAWVEKMKMRPAWLKTVVMKNHIVDLMKQRRLPIKLDSSCHESTVVAQKNAIAIENK.

The region spanning 4–85 (SKMKLHCGFI…YLAEQYKDVG (82 aa)) is the GST N-terminal domain. Residues 42–43 (AK), 56–57 (EV), and 69–70 (EP) contribute to the glutathione site. The region spanning 92-231 (DPKKRAIMSM…DLMKQRRLPI (140 aa)) is the GST C-terminal domain.

Belongs to the GST superfamily. Phi family.

It localises to the cytoplasm. The protein localises to the cytosol. It carries out the reaction RX + glutathione = an S-substituted glutathione + a halide anion + H(+). Its function is as follows. May be involved in the conjugation of reduced glutathione to a wide number of exogenous and endogenous hydrophobic electrophiles and have a detoxification role against certain herbicides. In Arabidopsis thaliana (Mouse-ear cress), this protein is Glutathione S-transferase F14.